The primary structure comprises 367 residues: tRNA-specific 2-thiouridylase MnmA (367 aa).

Residues 12–19 (GMSGGVDS) and methionine 38 contribute to the ATP site. The interaction with target base in tRNA stretch occupies residues 98-100 (NPD). Cysteine 103 acts as the Nucleophile in catalysis. A disulfide bridge links cysteine 103 with cysteine 200. Glycine 128 contributes to the ATP binding site. The segment at 150-152 (KDQ) is interaction with tRNA. Cysteine 200 acts as the Cysteine persulfide intermediate in catalysis. The tract at residues 312–313 (RY) is interaction with tRNA.

This sequence belongs to the MnmA/TRMU family. In terms of assembly, interacts with TusE.

It localises to the cytoplasm. It carries out the reaction S-sulfanyl-L-cysteinyl-[protein] + uridine(34) in tRNA + AH2 + ATP = 2-thiouridine(34) in tRNA + L-cysteinyl-[protein] + A + AMP + diphosphate + H(+). Functionally, catalyzes the 2-thiolation of uridine at the wobble position (U34) of tRNA(Lys), tRNA(Glu) and tRNA(Gln), leading to the formation of s(2)U34, the first step of tRNA-mnm(5)s(2)U34 synthesis. Sulfur is provided by IscS, via a sulfur-relay system. Binds ATP and its substrate tRNAs. The sequence is that of tRNA-specific 2-thiouridylase MnmA from Serratia proteamaculans (strain 568).